The primary structure comprises 363 residues: dTDP-3-amino-3,6-dideoxy-alpha-D-galactopyranose transaminase (363 aa).

The residue at position 185 (K185) is an N6-(pyridoxal phosphate)lysine.

Belongs to the DegT/DnrJ/EryC1 family. Requires pyridoxal 5'-phosphate as cofactor.

It catalyses the reaction dTDP-3-amino-3,6-dideoxy-alpha-D-galactopyranose + 2-oxoglutarate = dTDP-3-dehydro-6-deoxy-alpha-D-galactose + L-glutamate. Its function is as follows. Specifically aminates dTDP-6-deoxy-D-xylohex-3-ulose to form dTDP-D-Fucp3N in the biosynthesis of dTDP-3-acetamido-3,6-dideoxy-alpha-D-galactose, a glycan chain of the S-layer. In Aneurinibacillus thermoaerophilus, this protein is dTDP-3-amino-3,6-dideoxy-alpha-D-galactopyranose transaminase (fdtB).